Reading from the N-terminus, the 507-residue chain is Rho GTPase-activating protein 19 (507 aa).

Residues 112–305 (APLTEEGIAQ…FMIKHSQKLF (194 aa)) enclose the Rho-GAP domain. Disordered stretches follow at residues 344–371 (FLKH…QQHT), 400–419 (KNTP…KKHV), and 483–507 (DLQI…ETSI). Residues 355–369 (SSPSSSTSLQEQTQQ) are compositionally biased toward low complexity. Residues 400–413 (KNTPRTPVSDTQVP) are compositionally biased toward polar residues. Over residues 483–492 (DLQIRKEASS) the composition is skewed to basic and acidic residues.

Functionally, GTPase activator for the Rho-type GTPases by converting them to an inactive GDP-bound state. This Xenopus laevis (African clawed frog) protein is Rho GTPase-activating protein 19 (arhgap19).